Here is a 142-residue protein sequence, read N- to C-terminus: Hemoglobin subunit alpha (142 aa).

N-acetylserine is present on S1. The Globin domain occupies S1–R142. O2 is bound at residue H59. H88 serves as a coordination point for heme b.

This sequence belongs to the globin family. Hb1 is a heterotetramer of two alpha chains and two beta-1 chains, while Hb2 is a heterotetramer of two alpha chains and two beta-2 chains. Red blood cells.

Functionally, involved in oxygen transport from gills to the various peripheral tissues. The sequence is that of Hemoglobin subunit alpha (hba) from Cygnodraco mawsoni (Antarctic dragonfish).